A 380-amino-acid chain; its full sequence is Apelin receptor (380 aa).

Residues 1–30 (MEEGGDFDNYYGADNQSECEYTDWKSSGAL) are Extracellular-facing. Residue Asn15 is glycosylated (N-linked (GlcNAc...) asparagine). 2 disulfide bridges follow: Cys19–Cys281 and Cys102–Cys181. Residues 31-54 (IPAIYMLVFLLGTTGNGLVLWTVF) traverse the membrane as a helical segment. Residues 55–64 (RSSREKRRSA) lie on the Cytoplasmic side of the membrane. Residues 65 to 86 (DIFIASLAVADLTFVVTLPLWA) traverse the membrane as a helical segment. Topologically, residues 87–99 (TYTYRDYDWPFGT) are extracellular. The chain crosses the membrane as a helical span at residues 100-125 (FFCKLSSYLIFVNMYASVFCLTGLSF). Residues 126–146 (DRYLAIVRPVANARLRLRVSG) are Cytoplasmic-facing. The chain crosses the membrane as a helical span at residues 147 to 164 (AVATAVLWVLAALLAMPV). The Extracellular segment spans residues 165–198 (MVLRTTGDLENTTKVQCYMDYSMVATVSSEWAWE). The N-linked (GlcNAc...) asparagine glycan is linked to Asn175. A helical transmembrane segment spans residues 199 to 223 (VGLGVSSTTVGFVVPFTIMLTCYFF). The Cytoplasmic segment spans residues 224-246 (IAQTIAGHFRKERIEGLRKRRRL). A helical transmembrane segment spans residues 247–270 (LSIIVVLVVTFALCWMPYHLVKTL). At 271–289 (YMLGSLLHWPCDFDLFLMN) the chain is on the extracellular side. Residues 290 to 312 (IFPYCTCISYVNSCLNPFLYAFF) form a helical membrane-spanning segment. Residues 313–380 (DPRFRQACTS…PYSQETLVVD (68 aa)) lie on the Cytoplasmic side of the membrane. Residues 342 to 351 (KSASYSSGHS) are compositionally biased toward low complexity. The tract at residues 342–380 (KSASYSSGHSQGPGPNMGKGGEQMHEKSIPYSQETLVVD) is disordered. Residues 371–380 (PYSQETLVVD) show a composition bias toward polar residues.

Belongs to the G-protein coupled receptor 1 family. Homodimer; dimerization inhibits APLNR-mediated G protein and beta-arrestin signaling pathways compared to monomeric APLNR. Expressed in heart, brain, kidney, stomach, spleen, thymus, lung, ovary, small intestine and colon, adipose tissues and pancreas. Expressed in glial cells, astrocytes and neuronal subpopulations. Expressed in embryonic (ESCs) and induced (iPSCs) pluripotent stem cells.

It localises to the cell membrane. Its function is as follows. G protein-coupled receptor for peptide hormones apelin (APLN) and apelin receptor early endogenous ligand (APELA/ELA), that plays a role in the regulation of normal cardiovascular function and fluid homeostasis. When acting as apelin receptor, activates both G(i) protein pathway that inhibits adenylate cyclase activity, and the beta-arrestin pathway that promotes internalization of the receptor. APLNR/APJ also functions as mechanoreceptor that is activated by pathological stimuli in a G-protein-independent fashion to induce beta-arrestin signaling, hence eliciting cardiac hypertrophy. However, the presence of apelin ligand blunts cardiac hypertrophic induction from APLNR/APJ on response to pathological stimuli. Plays a key role in early development such as gastrulation, blood vessels formation and heart morphogenesis by acting as a APELA receptor. May promote angioblast migration toward the embryonic midline, i.e. the position of the future vessel formation, during vasculogenesis. Promotes sinus venosus (SV)-derived endothelial cells migration into the developing heart to promote coronary blood vessel development. Also plays a role in various processes in adults such as regulation of blood vessel formation, blood pressure, heart contractility and heart failure. In terms of biological role, (Microbial infection) Alternative coreceptor with CD4 for HIV-1 infection; may be involved in the development of AIDS dementia. The chain is Apelin receptor from Homo sapiens (Human).